Reading from the N-terminus, the 208-residue chain is Cysteine-rich protein 2 (208 aa).

An LIM zinc-binding 1 domain is found at 5–57; sequence CPKCDKTVYFAEKVSSLGKDWHKFCLKCERCSKTLTPGGHAEHDGKPFCHKPC. Residue K23 is modified to N6-acetyllysine. The interval 98 to 119 is disordered; it reads AEERKASGPPKGPSRASSVTTF. S104 bears the Phosphoserine mark. The LIM zinc-binding 2 domain maps to 126 to 178; that stretch reads CPRCSKKVYFAEKVTSLGKDWHRPCLRCERCGKTLTPGGHAEHDGQPYCHKPC. N6-acetyllysine is present on residues K138 and K144.

In terms of assembly, interacts with TGFB1I1. As to expression, widespread tissue expression; highest levels in the heart.

The sequence is that of Cysteine-rich protein 2 (CRIP2) from Homo sapiens (Human).